A 633-amino-acid chain; its full sequence is 1-deoxy-D-xylulose-5-phosphate synthase (633 aa).

Thiamine diphosphate-binding positions include His72 and 113–115; that span reads GHS. Asp144 lines the Mg(2+) pocket. Thiamine diphosphate is bound by residues 145–146, Asn173, Tyr284, and Glu367; that span reads GA. Asn173 provides a ligand contact to Mg(2+).

This sequence belongs to the transketolase family. DXPS subfamily. Homodimer. It depends on Mg(2+) as a cofactor. The cofactor is thiamine diphosphate.

The enzyme catalyses D-glyceraldehyde 3-phosphate + pyruvate + H(+) = 1-deoxy-D-xylulose 5-phosphate + CO2. It functions in the pathway metabolic intermediate biosynthesis; 1-deoxy-D-xylulose 5-phosphate biosynthesis; 1-deoxy-D-xylulose 5-phosphate from D-glyceraldehyde 3-phosphate and pyruvate: step 1/1. Catalyzes the acyloin condensation reaction between C atoms 2 and 3 of pyruvate and glyceraldehyde 3-phosphate to yield 1-deoxy-D-xylulose-5-phosphate (DXP). The sequence is that of 1-deoxy-D-xylulose-5-phosphate synthase from Bacillus licheniformis (strain ATCC 14580 / DSM 13 / JCM 2505 / CCUG 7422 / NBRC 12200 / NCIMB 9375 / NCTC 10341 / NRRL NRS-1264 / Gibson 46).